Here is a 574-residue protein sequence, read N- to C-terminus: MEKSTMSAVVLVLNLLVLHLQYSEVHSLANTSSEHDFGYLKFVYNAVDLELEGSYDYIIVGGGTSGCPLAATLSANYSVLVLERGTIATEYPNTLTVDGFAYNLQQQDDGKTPVERFVSEDGIDNVRSRILGGTTIINAGVYARANESFYNNSGVEWDLDLVNEAYEWVEDAIVYKPSNQSWQSITGTAFLEAGVHPDNGFGLVHEEGTRLTGSTFDNSGTRHASDELLNKGDPDNLKVAVEAAVQKIIFSTESSGLTAVGVVYTDSNGTSHRALVSGKGEVILSAGTLGTPQLLLLSGVGPESYLTSLNISVVASHPYVGQYVNDNPRNFINILPPNPIEPSTVTVLGITSDFYQCSLSSLPFDTPPFSLFPTTSYPLPNQTFAHIVSKVPGPLSAGSLTLQSSSNVSVAPNVKFNYCSDPVDLTHCVSGMKKIGVFLSTDALKPYKVDDLPGIDGFNILGTPLPENQTDDAAFEKFCRDTVASYWHYHGGAIVGKVIDGNFRVTGINALRVVDGSTFPATPASHPQGFYLMLGRYVGTKIVQERSASGEAIHTSTFKPKLMDSLKSALSFAF.

A signal peptide spans 1 to 27 (MEKSTMSAVVLVLNLLVLHLQYSEVHS). N-linked (GlcNAc...) asparagine glycosylation is present at Asn-30. 64-65 (TS) serves as a coordination point for FAD. A glycan (N-linked (GlcNAc...) asparagine) is linked at Asn-76. FAD is bound by residues 83–84 (ER), Thr-134, and 138–141 (NAGV). Residues Asn-146, Asn-151, and Asn-179 are each glycosylated (N-linked (GlcNAc...) asparagine). An FAD-binding site is contributed by Val-245. Residues Asn-268 and Asn-310 are each glycosylated (N-linked (GlcNAc...) asparagine). Cys-357 is a binding site for substrate. 3 N-linked (GlcNAc...) asparagine glycosylation sites follow: Asn-381, Asn-407, and Asn-468. Cys-428 and Cys-479 are oxidised to a cystine. Tyr-486 contacts substrate. FAD is bound by residues 487-488 (WH) and Gly-516. The active-site Proton donor is His-488. His-526 acts as the Proton acceptor in catalysis. FAD is bound at residue 527–528 (PQ).

The protein belongs to the GMC oxidoreductase family. In terms of assembly, monomer. Requires FAD as cofactor.

It localises to the vacuole. The protein resides in the aleurone grain. It carries out the reaction (R)-mandelonitrile = benzaldehyde + hydrogen cyanide. Functionally, involved in cyanogenesis, the release of HCN from injured tissues. Catalyzes the stereospecific addition of HCN to a variety of aldehydes in vitro. It is a major seed constituent, and could have the additional role of a storage form for reduced nitrogen. In Prunus serotina (Black cherry), this protein is (R)-mandelonitrile lyase 4 (MDL4).